Here is a 235-residue protein sequence, read N- to C-terminus: Urease accessory protein UreF (235 aa).

Belongs to the UreF family. UreD, UreF and UreG form a complex that acts as a GTP-hydrolysis-dependent molecular chaperone, activating the urease apoprotein by helping to assemble the nickel containing metallocenter of UreC. The UreE protein probably delivers the nickel.

The protein localises to the cytoplasm. Its function is as follows. Required for maturation of urease via the functional incorporation of the urease nickel metallocenter. This is Urease accessory protein UreF from Psychrobacter cryohalolentis (strain ATCC BAA-1226 / DSM 17306 / VKM B-2378 / K5).